The sequence spans 102 residues: MAKQKVRIRLKAYDHKILDQSARQIVEAAERTGALVAGPVPLPTKIEKHSVIRSPFIDKDSQEQFEIRTHKRLIDVLDPSQQTINALMKLNLPAGVDIEIKL.

It belongs to the universal ribosomal protein uS10 family. As to quaternary structure, part of the 30S ribosomal subunit.

Involved in the binding of tRNA to the ribosomes. The sequence is that of Small ribosomal subunit protein uS10 from Roseiflexus sp. (strain RS-1).